The following is a 296-amino-acid chain: 33 kDa chaperonin (296 aa).

Cystine bridges form between cysteine 238/cysteine 240 and cysteine 271/cysteine 274.

It belongs to the HSP33 family. Post-translationally, under oxidizing conditions two disulfide bonds are formed involving the reactive cysteines. Under reducing conditions zinc is bound to the reactive cysteines and the protein is inactive.

Its subcellular location is the cytoplasm. Its function is as follows. Redox regulated molecular chaperone. Protects both thermally unfolding and oxidatively damaged proteins from irreversible aggregation. Plays an important role in the bacterial defense system toward oxidative stress. This is 33 kDa chaperonin from Clostridium botulinum (strain 657 / Type Ba4).